A 64-amino-acid polypeptide reads, in one-letter code: Large ribosomal subunit protein bL35 (64 aa).

It belongs to the bacterial ribosomal protein bL35 family.

This chain is Large ribosomal subunit protein bL35, found in Shewanella putrefaciens (strain CN-32 / ATCC BAA-453).